The sequence spans 489 residues: MSEAITGAERYKSGVIPYKKMGYWEPDYVPKDTDIIAMFRITPQAGVEPEEAAAAVAGESSTATWTVVWTDRLTACELYRAKAFRTDPVPNTGEGTKTEQQYFAYIAYDLDLFEPGSIANLTASIIGNVFGFKAVKALRLEDMRIPVAYLKTFQGPATGIIVERERLDKFGRPLLGATTKPKLGLSGRNYGRVVYEGLKGGLDFMKDDENINSQPFMHWRDRFLYCMEAVNKASAATGEVKGHYLNVTAGTMEEMYERAEFAKSLGSVIIMIDLVIGYTAIQSMAKWARKNDMILHLHRAGNSTYSRQKNHGMNFRVICKWMRMAGVDHIHAGTVVGKLEGDPLMIKGFYDTLRDRHTPVSLEHGLFFEQDWASLNKVMPVASGGIHAGQMHQLLDYLGEDVILQFGGGTIGHPQGIQAGAVANRVALEAMIMARNEGRDYVKEGPQILEEAAKWCTPLKLALDTWKDITFNYESTDTADFVPSETASV.

Residues N128 and T178 each contribute to the substrate site. The Proton acceptor role is filled by K180. Residue K182 participates in substrate binding. Mg(2+)-binding residues include K206, D208, and E209. K206 carries the N6-carboxylysine modification. The active-site Proton acceptor is the H298. Substrate is bound by residues R299, H331, and S383.

Belongs to the RuBisCO large chain family. Type I subfamily. As to quaternary structure, heterohexadecamer of 8 large chains and 8 small chains. Mg(2+) serves as cofactor.

It catalyses the reaction 2 (2R)-3-phosphoglycerate + 2 H(+) = D-ribulose 1,5-bisphosphate + CO2 + H2O. The catalysed reaction is D-ribulose 1,5-bisphosphate + O2 = 2-phosphoglycolate + (2R)-3-phosphoglycerate + 2 H(+). In terms of biological role, ruBisCO catalyzes two reactions: the carboxylation of D-ribulose 1,5-bisphosphate, the primary event in carbon dioxide fixation, as well as the oxidative fragmentation of the pentose substrate. Both reactions occur simultaneously and in competition at the same active site. The chain is Ribulose bisphosphate carboxylase large chain from Nitrosospira multiformis (strain ATCC 25196 / NCIMB 11849 / C 71).